A 413-amino-acid polypeptide reads, in one-letter code: Tyrosine--tRNA ligase (413 aa).

L-tyrosine is bound at residue Tyr-34. The 'HIGH' region motif lies at Cys-39 to Asn-48. Residues Tyr-171 and Gln-175 each coordinate L-tyrosine. The 'KMSKS' region signature appears at Lys-231 to Thr-235. Residue Lys-234 coordinates ATP. Positions Ile-346–Ile-411 constitute an S4 RNA-binding domain.

The protein belongs to the class-I aminoacyl-tRNA synthetase family. TyrS type 1 subfamily. In terms of assembly, homodimer.

The protein localises to the cytoplasm. The catalysed reaction is tRNA(Tyr) + L-tyrosine + ATP = L-tyrosyl-tRNA(Tyr) + AMP + diphosphate + H(+). Catalyzes the attachment of tyrosine to tRNA(Tyr) in a two-step reaction: tyrosine is first activated by ATP to form Tyr-AMP and then transferred to the acceptor end of tRNA(Tyr). The protein is Tyrosine--tRNA ligase of Orientia tsutsugamushi (strain Boryong) (Rickettsia tsutsugamushi).